The chain runs to 1135 residues: DNA-directed RNA polymerase I subunit RPA2 (1135 aa).

A disordered region spans residues methionine 1–isoleucine 26. An RNA-binding site is contributed by arginine 180. Residues valine 194 to phenylalanine 208 form a loop B region. The segment at leucine 236–leucine 247 is loop A. Residue aspartate 367 participates in RNA binding. Fork loop stretches follow at residues leucine 439–leucine 453 and arginine 474–leucine 489. Position 755 (aspartate 755) interacts with Mg(2+). Residue lysine 890 coordinates RNA. Residues lysine 1020 and arginine 1036 each contribute to the DNA site. Position 1051 is a phosphoserine (serine 1051). Zn(2+) contacts are provided by cysteine 1070, cysteine 1073, cysteine 1098, and cysteine 1101. The segment at cysteine 1070–cysteine 1101 adopts a C4-type zinc-finger fold.

Belongs to the RNA polymerase beta chain family. Component of the RNA polymerase I (Pol I) complex consisting of 13 subunits: a ten-subunit catalytic core composed of POLR1A/RPA1, POLR1B/RPA2, POLR1C/RPAC1, POLR1D/RPAC2, POLR1H/RPA12, POLR2E/RPABC1, POLR2F/RPABC2, POLR2H/RPABC3, POLR2K/RPABC4 and POLR2L/RPABC5; a mobile stalk subunit POLR1F/RPA43 protruding from the core and additional subunits homologous to general transcription factors POLR1E/RPA49 and POLR1G/RPA34. Part of Pol I pre-initiation complex (PIC), in which Pol I core assembles with RRN3 and promoter-bound UTBF and SL1/TIF-IB complex. It depends on Mg(2+) as a cofactor.

The protein localises to the nucleus. It localises to the nucleolus. Its subcellular location is the chromosome. The catalysed reaction is RNA(n) + a ribonucleoside 5'-triphosphate = RNA(n+1) + diphosphate. In terms of biological role, catalytic core component of RNA polymerase I (Pol I), a DNA-dependent RNA polymerase which synthesizes ribosomal RNA precursors using the four ribonucleoside triphosphates as substrates. Transcribes 47S pre-rRNAs from multicopy rRNA gene clusters, giving rise to 5.8S, 18S and 28S ribosomal RNAs. Pol I-mediated transcription cycle proceeds through transcription initiation, transcription elongation and transcription termination stages. During transcription initiation, Pol I pre-initiation complex (PIC) is recruited by the selectivity factor 1 (SL1/TIF-IB) complex bound to the core promoter that precedes an rDNA repeat unit. The PIC assembly bends the promoter favoring the formation of the transcription bubble and promoter escape. Once the polymerase has escaped from the promoter it enters the elongation phase during which RNA is actively polymerized, based on complementarity with the template DNA strand. Highly processive, assembles in structures referred to as 'Miller trees' where many elongating Pol I complexes queue and transcribe the same rDNA coding regions. At terminator sequences downstream of the rDNA gene, PTRF interacts with Pol I and halts Pol I transcription leading to the release of the RNA transcript and polymerase from the DNA. Forms Pol I active center together with the largest subunit POLR1A/RPA1. Appends one nucleotide at a time to the 3' end of the nascent RNA, with POLR1A/RPA1 contributing a Mg(2+)-coordinating DxDGD motif, and POLR1B/RPA2 participating in the coordination of a second Mg(2+) ion and providing lysine residues believed to facilitate Watson-Crick base pairing between the incoming nucleotide and the template base. Typically, Mg(2+) ions direct a 5' nucleoside triphosphate to form a phosphodiester bond with the 3' hydroxyl of the preceding nucleotide of the nascent RNA, with the elimination of pyrophosphate. Has proofreading activity: Pauses and backtracks to allow the cleavage of a missincorporated nucleotide via POLR1H/RPA12. High Pol I processivity is associated with decreased transcription fidelity. The sequence is that of DNA-directed RNA polymerase I subunit RPA2 from Mus musculus (Mouse).